The following is a 241-amino-acid chain: MKLIFLSGVKRSGKDTTADFIMSNYSAVKYQLAGPIKDALAYAWGVFAANTDYPCLTRKEFEGIDYDRETNLNLTKLEVITIMEQAFCYLNGKSPIKGVFVFDDEGKESVNFVAFNKITDVINNIEDQWSVRRLMQALGTDLIVNNFDRMYWVKLFALDYLDKFNSGYDYYIVPDTRQDHEMDAARAMGATVIHVVRPGQKSNDTHITEAGLPIRDGDLVITNDGSLEELFSKIKNTLKVL.

Lys-10 is a dGMP binding site. The ATP site is built by Arg-11, Gly-13, Asp-15, and Thr-16. DGMP contacts are provided by Ile-36 and Lys-37. Tyr-42 serves as a coordination point for Mg(2+). Arg-68 is a dGMP binding site. Mg(2+)-binding residues include Gln-85 and Glu-108. Arg-132, Gly-139, Thr-140, Val-144, Trp-152, Asp-175, Arg-177, Gln-178, Glu-181, and Thr-208 together coordinate dGMP.

Belongs to the dNMP kinase family. As to quaternary structure, homodimer. It depends on Mg(2+) as a cofactor.

It carries out the reaction dTMP + ATP = dTDP + ADP. The catalysed reaction is dGMP + ATP = dGDP + ADP. The enzyme catalyses 5-hydroxymethyl-dCMP + ATP = 5-hydroxymethyl-dCDP + ADP. Inhibited by pyridoxal 5'-phosphate and diethylpyrocarbonate. Its function is as follows. Allows the synthesis of deoxyribonucleoside triphosphates necessary for the rapid viral DNA replication. Phosphorylates dGMP, dTMP and 5-hydroxymethyl-dCMP (hmdCMP) while excluding dCMP and dAMP. The phosphorylation of 5-hydroxymethyl-dCMP represents the first step in the replacement of cytosine by hydroxymethylcytosine in new viral DNA genomes. This chain is Deoxynucleotide monophosphate kinase (1), found in Enterobacteria phage T4 (Bacteriophage T4).